Here is a 488-residue protein sequence, read N- to C-terminus: Malonate-semialdehyde dehydrogenase 2 (488 aa).

The NAD(+) site is built by F155, K179, E182, R183, and S232. C287 acts as the Nucleophile in catalysis. Residue E387 participates in NAD(+) binding.

This sequence belongs to the aldehyde dehydrogenase family. IolA subfamily. As to quaternary structure, homotetramer.

The catalysed reaction is 3-oxopropanoate + NAD(+) + CoA + H2O = hydrogencarbonate + acetyl-CoA + NADH + H(+). It catalyses the reaction 2-methyl-3-oxopropanoate + NAD(+) + CoA + H2O = propanoyl-CoA + hydrogencarbonate + NADH + H(+). Its pathway is polyol metabolism; myo-inositol degradation into acetyl-CoA; acetyl-CoA from myo-inositol: step 7/7. Its function is as follows. Catalyzes the oxidation of malonate semialdehyde (MSA) and methylmalonate semialdehyde (MMSA) into acetyl-CoA and propanoyl-CoA, respectively. Is involved in a myo-inositol catabolic pathway. Bicarbonate, and not CO2, is the end-product of the enzymatic reaction. In Bacillus cereus (strain ZK / E33L), this protein is Malonate-semialdehyde dehydrogenase 2.